Reading from the N-terminus, the 404-residue chain is uncharacterized protein (404 aa).

Residues cysteine 69, cysteine 75, cysteine 78, and cysteine 166 each contribute to the [4Fe-4S] cluster site. S-adenosyl-L-methionine is bound by residues glutamine 226, tyrosine 253, glutamate 274, and aspartate 334. The active-site Nucleophile is the cysteine 361.

Belongs to the class I-like SAM-binding methyltransferase superfamily. RNA M5U methyltransferase family.

This is an uncharacterized protein from Treponema denticola (strain ATCC 35405 / DSM 14222 / CIP 103919 / JCM 8153 / KCTC 15104).